Here is a 299-residue protein sequence, read N- to C-terminus: Fluorinase (299 aa).

Residues Asp-15, Asp-20 to Ser-22, Tyr-76, Ser-157, Asp-210, Asn-215, Ser-269 to Arg-270, and Arg-277 to Ala-279 each bind S-adenosyl-L-methionine.

It belongs to the SAM hydrolase / SAM-dependent halogenase family.

It catalyses the reaction fluoride + S-adenosyl-L-methionine = 5'-deoxy-5'-fluoroadenosine + L-methionine. Activity is not severely affected by most metal ions (Mg(2+), Mn(2+), Co(2+) and Fe(2+)), but both Cu(2+) and Zn(2+) are strong inhibitors. Its function is as follows. Catalyzes the formation of a C-F bond by combining S-adenosyl-L-methionine (SAM) and fluoride to generate 5'-fluoro-5'-deoxyadenosine (5'-FDA) and L-methionine. This chain is Fluorinase, found in Actinopolyspora mzabensis.